A 357-amino-acid polypeptide reads, in one-letter code: Transactivator protein DR7 (357 aa).

An interaction with host p53 region spans residues 107-187; sequence LVGKDGAVYV…LLTVGGLCQT (81 aa).

Belongs to the herpesviridae US22 family. As to quaternary structure, interacts with host p53 and inhibits p53-activated transcription.

Involved in transactivation. Displays transforming activity. This is Transactivator protein DR7 (DR7L) from Homo sapiens (Human).